The sequence spans 1091 residues: Error-prone DNA polymerase 1 (1091 aa).

Residues 1051 to 1064 are compositionally biased toward basic and acidic residues; sequence RGDEFHHGMPDDHR. The interval 1051–1080 is disordered; that stretch reads RGDEFHHGMPDDHRAIRKRPPPSNHDDDEV.

This sequence belongs to the DNA polymerase type-C family. DnaE2 subfamily.

It is found in the cytoplasm. The catalysed reaction is DNA(n) + a 2'-deoxyribonucleoside 5'-triphosphate = DNA(n+1) + diphosphate. Its function is as follows. DNA polymerase involved in damage-induced mutagenesis and translesion synthesis (TLS). It is not the major replicative DNA polymerase. This Agrobacterium fabrum (strain C58 / ATCC 33970) (Agrobacterium tumefaciens (strain C58)) protein is Error-prone DNA polymerase 1.